A 439-amino-acid polypeptide reads, in one-letter code: Hemagglutinin-esterase (439 aa).

The signal sequence occupies residues 1 to 22 (MGSTCIAMAPRTLLLLIGCQLV). The segment at 12–132 (TLLLLIGCQL…DNKRWMGNKA (121 aa)) is esterase domain 1. Residues 23–407 (FGFNEPLNIV…PVCIYDPLPV (385 aa)) lie on the Virion surface side of the membrane. S45 (nucleophile) is an active-site residue. C49 and C70 are oxidised to a cystine. N-linked (GlcNAc...) asparagine; by host glycosylation occurs at N94. A disulfide bridge connects residues C118 and C167. A receptor binding region spans residues 133–281 (RFYARVYEKM…GNYKAVSLEY (149 aa)). N-linked (GlcNAc...) asparagine; by host glycans are attached at residues N196, N246, N309, and N316. Disulfide bonds link C202–C291 and C210–C264. The interval 282 to 395 (LLSLPSKAIC…QCPTAANIGY (114 aa)) is esterase domain 2. A disulfide bridge links C322 with C327. N331 carries an N-linked (GlcNAc...) asparagine; by host glycan. Active-site charge relay system residues include D342 and H345. 2 N-linked (GlcNAc...) asparagine; by host glycosylation sites follow: N360 and N374. A disulfide bond links C363 and C387. Residues 408 to 428 (VLLGVLLGIAVLIIVFLILYF) form a helical membrane-spanning segment. Over 429–439 (MTDSGVRLHEA) the chain is Intravirion.

This sequence belongs to the influenza type C/coronaviruses hemagglutinin-esterase family. Homodimer; disulfide-linked. Forms a complex with the M protein in the pre-Golgi. Associates then with S-M complex to form a ternary complex S-M-HE. Post-translationally, N-glycosylated in the host RER.

The protein resides in the virion membrane. The protein localises to the host cell membrane. The enzyme catalyses N-acetyl-9-O-acetylneuraminate + H2O = N-acetylneuraminate + acetate + H(+). It carries out the reaction N-acetyl-4-O-acetylneuraminate + H2O = N-acetylneuraminate + acetate + H(+). Structural protein that makes short spikes at the surface of the virus. Contains receptor binding and receptor-destroying activities. Mediates de-O-acetylation of N-acetyl-4-O-acetylneuraminic acid, which is probably the receptor determinant recognized by the virus on the surface of erythrocytes and susceptible cells. This receptor-destroying activity is important for virus release as it probably helps preventing self-aggregation and ensures the efficient spread of the progeny virus from cell to cell. May serve as a secondary viral attachment protein for initiating infection, the spike protein being the major one. May become a target for both the humoral and the cellular branches of the immune system. This is Hemagglutinin-esterase from Murine coronavirus (strain JHM) (MHV-JHM).